Consider the following 419-residue polypeptide: S-adenosylmethionine synthase (419 aa).

Histidine 15 contributes to the ATP binding site. Aspartate 17 provides a ligand contact to Mg(2+). Position 43 (glutamate 43) interacts with K(+). L-methionine-binding residues include glutamate 56 and glutamine 100. The interval 100–110 (QSPDIAQGVNE) is flexible loop. ATP contacts are provided by residues 171–173 (DGK), 248–249 (KF), aspartate 257, 263–264 (RK), alanine 280, and lysine 284. Aspartate 257 serves as a coordination point for L-methionine. Lysine 288 is an L-methionine binding site.

Belongs to the AdoMet synthase family. In terms of assembly, homotetramer; dimer of dimers. Requires Mg(2+) as cofactor. The cofactor is K(+).

It is found in the cytoplasm. It catalyses the reaction L-methionine + ATP + H2O = S-adenosyl-L-methionine + phosphate + diphosphate. The protein operates within amino-acid biosynthesis; S-adenosyl-L-methionine biosynthesis; S-adenosyl-L-methionine from L-methionine: step 1/1. In terms of biological role, catalyzes the formation of S-adenosylmethionine (AdoMet) from methionine and ATP. The overall synthetic reaction is composed of two sequential steps, AdoMet formation and the subsequent tripolyphosphate hydrolysis which occurs prior to release of AdoMet from the enzyme. This is S-adenosylmethionine synthase from Prochlorococcus marinus (strain MIT 9303).